Consider the following 309-residue polypeptide: Coproporphyrin III ferrochelatase (309 aa).

Residues tyrosine 12, threonine 14, arginine 29, 45–46 (RY), serine 53, and tyrosine 124 contribute to the Fe-coproporphyrin III site. Residues histidine 182 and glutamate 263 each coordinate Fe(2+).

This sequence belongs to the ferrochelatase family. In terms of assembly, monomer.

The protein resides in the cytoplasm. It catalyses the reaction Fe-coproporphyrin III + 2 H(+) = coproporphyrin III + Fe(2+). Its pathway is porphyrin-containing compound metabolism; protoheme biosynthesis. Functionally, involved in coproporphyrin-dependent heme b biosynthesis. Catalyzes the insertion of ferrous iron into coproporphyrin III to form Fe-coproporphyrin III. The polypeptide is Coproporphyrin III ferrochelatase (Listeria monocytogenes serovar 1/2a (strain ATCC BAA-679 / EGD-e)).